The primary structure comprises 782 residues: General transcription and DNA repair factor IIH helicase/translocase subunit XPB (782 aa).

The span at 1–11 (MGKRDRADRDK) shows a compositional bias: basic and acidic residues. 2 disordered regions span residues 1–51 (MGKR…ESGT) and 218–241 (SAIS…PQGK). Residues 6–18 (RADRDKKKSRKRH) carry the Nuclear localization signal motif. The segment covering 21–30 (DEEDDEEDAP) has biased composition (acidic residues). Residues 218-236 (SAISKTAESSGGPSTSRVT) show a composition bias toward polar residues. The 162-residue stretch at 327-488 (MFGNGRARSG…DLNFLIGPKL (162 aa)) folds into the Helicase ATP-binding domain. Residue 340–347 (LPCGAGKS) participates in ATP binding. A DEVH box motif is present at residues 441–444 (DEVH). The region spanning 542–702 (RACQFLIKFH…LAGMEEEDLA (161 aa)) is the Helicase C-terminal domain. ATP is bound by residues arginine 642 and arginine 645. Serine 686 carries the post-translational modification Phosphoserine. Serine 751 bears the Phosphoserine; by CK2 mark.

Belongs to the helicase family. RAD25/XPB subfamily. Component of the 7-subunit TFIIH core complex composed of XPB/ERCC3, XPD/ERCC2, GTF2H1, GTF2H2, GTF2H3, GTF2H4 and GTF2H5, which is active in NER. The core complex associates with the 3-subunit CDK-activating kinase (CAK) module composed of CCNH/cyclin H, CDK7 and MNAT1 to form the 10-subunit holoenzyme (holo-TFIIH) active in transcription. Interacts with PUF60. Interacts with ATF7IP. Interacts with KAT2A; leading to KAT2A recruitment to promoters and acetylation of histones. Part of TBP-based Pol II pre-initiation complex (PIC), in which Pol II core assembles with general transcription factors and other specific initiation factors including GTF2E1, GTF2E2, GTF2F1, GTF2F2, TCEA1, ERCC2, ERCC3, GTF2H2, GTF2H3, GTF2H4, GTF2H5, GTF2A1, GTF2A2, GTF2B and TBP; this large multi-subunit PIC complex mediates DNA unwinding and targets Pol II core to the transcription start site where the first phosphodiester bond forms. In terms of assembly, (Microbial infection) Interacts with Epstein-Barr virus EBNA2. Post-translationally, phosphorylation on Ser-751 by CK2 controls the 5'-excision activity of ERCC1-XPF endonuclease; phosphorylated protein inhibits the excision activity and thus NER. Dephosphorylation reactivates the 5'-excision step. Phosphorylation has no effect on transcription or the 3'-5' helicase activity.

The protein resides in the nucleus. It carries out the reaction Couples ATP hydrolysis with the unwinding of duplex DNA by translocating in the 3'-5' direction.. It catalyses the reaction ATP + H2O = ADP + phosphate + H(+). With respect to regulation, phosphorylation on Ser-751 by CK2 controls the 5'-excision activity of ERCC1-XPF endonuclease; phosphorylated protein inhibits the excision activity and thus NER. ATPase activity is stimulated by TFIIH subunit p52 (GTF2H4). DNA translocase activity by this subunit in TFIIH is stimulated by XPA, ERCC5/XPG and XFP plus ERCC1; translocase activity is sensitive to triptolide which targets this enzyme. In terms of biological role, ATP-dependent 3'-5' DNA helicase/translocase. Binds dsDNA rather than ssDNA, unzipping it in a translocase rather than classical helicase activity. Component of the general transcription and DNA repair factor IIH (TFIIH) core complex. When complexed to CDK-activating kinase (CAK), involved in RNA transcription by RNA polymerase II. The ATPase activity of XPB/ERCC3, but not its helicase activity, is required for DNA opening; it may wrap around the damaged DNA wedging it open, causing localized melting that allows XPD/ERCC2 helicase to anchor. In transcription, TFIIH has an essential role in transcription initiation. When the pre-initiation complex (PIC) has been established, TFIIH is required for promoter opening and promoter escape. The ATP-dependent helicase activity of XPB/ERCC3 is required for promoter opening and promoter escape. In transcription pre-initiation complexes induces and propagates a DNA twist to open DNA. Also involved in transcription-coupled nucleotide excision repair (NER) of damaged DNA. In NER, TFIIH acts by opening DNA around the lesion to allow the excision of the damaged oligonucleotide and its replacement by a new DNA fragment. The structure of the TFIIH transcription complex differs from the NER-TFIIH complex; large movements by XPD/ERCC2 and XPB/ERCC3 are stabilized by XPA. XPA retains XPB/ERCC3 at the 5' end of a DNA bubble (mimicking DNA damage). This chain is General transcription and DNA repair factor IIH helicase/translocase subunit XPB, found in Homo sapiens (Human).